The following is a 432-amino-acid chain: Serine/threonine-protein kinase stk11 (432 aa).

Residues 52 to 312 form the Protein kinase domain; it reads YLMGDLLGEG…IQQIRQHNWF (261 aa). ATP contacts are provided by residues 58 to 66 and K81; that span reads LGEGSYGKV. The Proton acceptor role is filled by D179. Phosphothreonine; by autocatalysis is present on T192. The interval 398-432 is disordered; sequence TESQLKTERRVSSSSQRKASTTGSKVRKLSACKQQ. Residues 409-421 are compositionally biased toward polar residues; the sequence is SSSSQRKASTTGS. Over residues 422–432 the composition is skewed to basic residues; the sequence is KVRKLSACKQQ. Position 427 is a phosphoserine; by PKA (S427).

Belongs to the protein kinase superfamily. CAMK Ser/Thr protein kinase family. LKB1 subfamily. As to quaternary structure, catalytic component of a trimeric complex composed of STK11/LKB1, STRAD (STRADA or STRADB) and CAB39/MO25 (CAB39/MO25alpha or CAB39L/MO25beta). Mg(2+) is required as a cofactor. Requires Mn(2+) as cofactor. Post-translationally, phosphorylated by a cAMP-dependent protein kinase. Autophosphorylated in a reaction that prefers Mn(2+) to Mg(2+). As to expression, oocytes, eggs and early embryos.

It is found in the nucleus. Its subcellular location is the cytoplasm. It catalyses the reaction L-seryl-[protein] + ATP = O-phospho-L-seryl-[protein] + ADP + H(+). The catalysed reaction is L-threonyl-[protein] + ATP = O-phospho-L-threonyl-[protein] + ADP + H(+). In terms of biological role, tumor suppressor serine/threonine-protein kinase that controls the activity of AMP-activated protein kinase (AMPK) family members, thereby playing a role in various processes such as cell metabolism, cell polarity, apoptosis and DNA damage response. Acts by phosphorylating the T-loop of AMPK family proteins, leading to promote their activity. This is Serine/threonine-protein kinase stk11 from Xenopus laevis (African clawed frog).